The chain runs to 268 residues: Type II methyltransferase M2.DpnII (268 aa).

Belongs to the N(4)/N(6)-methyltransferase family. Homodimer.

The enzyme catalyses a 2'-deoxyadenosine in DNA + S-adenosyl-L-methionine = an N(6)-methyl-2'-deoxyadenosine in DNA + S-adenosyl-L-homocysteine + H(+). Functionally, a beta subtype methylase that recognizes the single- or double-stranded sequence 5'-GATC-3', methylates A-2 on one or both strands (respectively), and protects the DNA from cleavage by the DpnII endonuclease. Further methylates DNA that is already methylated at 5'-GATC-3' sites. Essential for establishment of a previously unmethylated plasmid transformed into the cell as single-stranded DNA, enhances plasmid transfer to DpnII-containing strains of Streptococcus pneumoniae. The polypeptide is Type II methyltransferase M2.DpnII (Streptococcus pneumoniae).